A 462-amino-acid polypeptide reads, in one-letter code: ATP synthase subunit beta (462 aa).

An ATP-binding site is contributed by 151–158 (GGAGVGKT).

The protein belongs to the ATPase alpha/beta chains family. F-type ATPases have 2 components, CF(1) - the catalytic core - and CF(0) - the membrane proton channel. CF(1) has five subunits: alpha(3), beta(3), gamma(1), delta(1), epsilon(1). CF(0) has four main subunits: a(1), b(1), b'(1) and c(9-12).

Its subcellular location is the cell inner membrane. It catalyses the reaction ATP + H2O + 4 H(+)(in) = ADP + phosphate + 5 H(+)(out). Produces ATP from ADP in the presence of a proton gradient across the membrane. The catalytic sites are hosted primarily by the beta subunits. This Pelodictyon phaeoclathratiforme (strain DSM 5477 / BU-1) protein is ATP synthase subunit beta.